A 385-amino-acid chain; its full sequence is Phosphatidate cytidylyltransferase, mitochondrial (385 aa).

This sequence belongs to the TAM41 family. It depends on Mg(2+) as a cofactor. Co(2+) is required as a cofactor. Cu(2+) serves as cofactor.

It localises to the mitochondrion inner membrane. It carries out the reaction a 1,2-diacyl-sn-glycero-3-phosphate + CTP + H(+) = a CDP-1,2-diacyl-sn-glycerol + diphosphate. The protein operates within phospholipid metabolism; CDP-diacylglycerol biosynthesis; CDP-diacylglycerol from sn-glycerol 3-phosphate: step 3/3. Its function is as follows. Catalyzes the formation of CDP-diacylglycerol (CDP-DAG) from phosphatidic acid (PA) in the mitochondrial inner membrane. Required for the biosynthesis of the dimeric phospholipid cardiolipin, which stabilizes supercomplexes of the mitochondrial respiratory chain in the mitochondrial inner membrane. This is Phosphatidate cytidylyltransferase, mitochondrial (TAM41) from Saccharomyces cerevisiae (strain ATCC 204508 / S288c) (Baker's yeast).